The sequence spans 279 residues: Large ribosomal subunit protein mL46 (279 aa).

An N6-acetyllysine modification is found at K230.

This sequence belongs to the mitochondrion-specific ribosomal protein mL46 family. In terms of assembly, component of the mitochondrial large ribosomal subunit (mt-LSU). Mature mammalian 55S mitochondrial ribosomes consist of a small (28S) and a large (39S) subunit. The 28S small subunit contains a 12S ribosomal RNA (12S mt-rRNA) and 30 different proteins. The 39S large subunit contains a 16S rRNA (16S mt-rRNA), a copy of mitochondrial valine transfer RNA (mt-tRNA(Val)), which plays an integral structural role, and 52 different proteins. mL46 is located at the central protuberance.

The protein resides in the mitochondrion. The chain is Large ribosomal subunit protein mL46 (MRPL46) from Homo sapiens (Human).